Reading from the N-terminus, the 354-residue chain is NADH-quinone oxidoreductase subunit H (354 aa).

Transmembrane regions (helical) follow at residues 22–42 (ILIR…YLIL), 91–111 (YLIA…VIPF), 124–144 (LLYV…AGWA), 168–188 (MGFA…SAIV), 203–223 (ILSW…ISGV), 255–275 (LFFL…ALMF), 291–311 (IPGF…FIWI), and 326–346 (LGWK…AIWI).

It belongs to the complex I subunit 1 family. As to quaternary structure, NDH-1 is composed of 14 different subunits. Subunits NuoA, H, J, K, L, M, N constitute the membrane sector of the complex.

It localises to the cell inner membrane. It catalyses the reaction a quinone + NADH + 5 H(+)(in) = a quinol + NAD(+) + 4 H(+)(out). In terms of biological role, NDH-1 shuttles electrons from NADH, via FMN and iron-sulfur (Fe-S) centers, to quinones in the respiratory chain. The immediate electron acceptor for the enzyme in this species is believed to be ubiquinone. Couples the redox reaction to proton translocation (for every two electrons transferred, four hydrogen ions are translocated across the cytoplasmic membrane), and thus conserves the redox energy in a proton gradient. This subunit may bind ubiquinone. The polypeptide is NADH-quinone oxidoreductase subunit H (Cupriavidus necator (strain ATCC 17699 / DSM 428 / KCTC 22496 / NCIMB 10442 / H16 / Stanier 337) (Ralstonia eutropha)).